The sequence spans 99 residues: A-type ATP synthase subunit F (99 aa).

This sequence belongs to the V-ATPase F subunit family. In terms of assembly, has multiple subunits with at least A(3), B(3), C, D, E, F, H, I and proteolipid K(x).

Its subcellular location is the cell membrane. Its function is as follows. Component of the A-type ATP synthase that produces ATP from ADP in the presence of a proton gradient across the membrane. This chain is A-type ATP synthase subunit F, found in Methanococcus maripaludis (strain DSM 14266 / JCM 13030 / NBRC 101832 / S2 / LL).